The sequence spans 190 residues: Threonylcarbamoyl-AMP synthase (190 aa).

The 181-residue stretch at 10-190 (PQDKESVYRH…DWHSRQVIRA (181 aa)) folds into the YrdC-like domain.

Belongs to the SUA5 family. TsaC subfamily.

It is found in the cytoplasm. The enzyme catalyses L-threonine + hydrogencarbonate + ATP = L-threonylcarbamoyladenylate + diphosphate + H2O. Required for the formation of a threonylcarbamoyl group on adenosine at position 37 (t(6)A37) in tRNAs that read codons beginning with adenine. Catalyzes the conversion of L-threonine, HCO(3)(-)/CO(2) and ATP to give threonylcarbamoyl-AMP (TC-AMP) as the acyladenylate intermediate, with the release of diphosphate. This Dichelobacter nodosus (strain VCS1703A) protein is Threonylcarbamoyl-AMP synthase.